We begin with the raw amino-acid sequence, 466 residues long: Reticulophagy regulator 3 (466 aa).

The tract at residues 1–28 is disordered; that stretch reads MAEAEGVPTTPGPASGSTFRGRRDVSGS. Residue A2 is modified to N-acetylalanine. Over 2 to 80 the chain is Cytoplasmic; the sequence is AEAEGVPTTP…WCLGLNAAFW (79 aa). Residue T10 is modified to Phosphothreonine. Phosphoserine is present on S26. A helical membrane pass occupies residues 81–101; sequence FFALTSLRLVFLLAFGLMIIV. Residues 102 to 163 lie on the Lumenal side of the membrane; that stretch reads CIDQWKNKIW…FIRNVLLFKK (62 aa). A helical membrane pass occupies residues 164 to 184; it reads QNPGKFCLLSCGILTFLAVLG. The Cytoplasmic portion of the chain corresponds to 185-186; it reads RY. Residues 187–207 traverse the membrane as a helical segment; it reads VPGLLLSYLMLVTVMMWPLAV. Residues 208–381 are Lumenal-facing; sequence YHRLWDRAYV…ASRDEAALPE (174 aa). Phosphoserine is present on residues S258 and S260. T283 carries the phosphothreonine modification. The interval 284-374 is disordered; that stretch reads DSEHSDAEVS…EEPQAPPASR (91 aa). Residues S285, S288, S293, and S303 each carry the phosphoserine modification. Polar residues predominate over residues 294-310; sequence CTDNGTFNLSRGQTPLT. Phosphothreonine occurs at positions 307 and 310. Phosphoserine occurs at positions 313, 320, and 360. Positions 316-331 are enriched in basic and acidic residues; the sequence is LDGHSDPEESFARDLP. A helical transmembrane segment spans residues 382-402; that stretch reads LLLGALPVGSNLTSNLASLVS. Residues 403 to 466 lie on the Cytoplasmic side of the membrane; it reads QGMIQLALSG…QLDPASSRSH (64 aa). The interval 412-466 is disordered; sequence GASQPGPSGAPAQRATRGFLRSPSSDLDTDAEGDDFELLDQSELSQLDPASSRSH. Over residues 438 to 451 the composition is skewed to acidic residues; the sequence is LDTDAEGDDFELLD. T440 carries the post-translational modification Phosphothreonine. The LIR motif signature appears at 445–450; the sequence is DDFELL. Positions 453–466 are enriched in polar residues; that stretch reads SELSQLDPASSRSH.

It belongs to the RETREG family. As to quaternary structure, interacts with ATG8 family modifier proteins MAP1LC3A, MAP1LC3B, MAP1LC3C, GABARAP, GABARAPL1 and GABARAPL2. Interacts with CANX. Interacts with RTN4 isoform B.

It localises to the endoplasmic reticulum membrane. Functionally, endoplasmic reticulum (ER)-anchored autophagy regulator which exists in an inactive state under basal conditions but is activated following cellular stress. When activated, induces ER fragmentation and mediates ER delivery into lysosomes through sequestration into autophagosomes via interaction with ATG8 family proteins. Promotes ER membrane curvature and ER tubulation required for subsequent ER fragmentation and engulfment into autophagosomes. Required for collagen quality control in a LIR motif-dependent manner. Mediates NRF1-enhanced neurite outgrowth. This is Reticulophagy regulator 3 from Homo sapiens (Human).